Consider the following 332-residue polypeptide: Fructose-1,6-bisphosphatase class 1 (332 aa).

4 residues coordinate Mg(2+): glutamate 89, aspartate 110, leucine 112, and aspartate 113. Substrate contacts are provided by residues 113-116, asparagine 206, tyrosine 239, 257-259, and lysine 269; these read DGSS and YLY. Residue glutamate 275 participates in Mg(2+) binding.

The protein belongs to the FBPase class 1 family. In terms of assembly, homotetramer. Requires Mg(2+) as cofactor.

The protein localises to the cytoplasm. The catalysed reaction is beta-D-fructose 1,6-bisphosphate + H2O = beta-D-fructose 6-phosphate + phosphate. Its pathway is carbohydrate biosynthesis; gluconeogenesis. In Shigella sonnei (strain Ss046), this protein is Fructose-1,6-bisphosphatase class 1.